The following is a 473-amino-acid chain: Photosystem II CP43 reaction center protein (473 aa).

Positions 1-14 (MKTLYSLRRFYHVE) are excised as a propeptide. An N-acetylthreonine modification is found at Thr15. The residue at position 15 (Thr15) is a Phosphothreonine. Helical transmembrane passes span 69-93 (LFEV…PHLA), 134-155 (LIGP…RDKN), 178-200 (KAIY…RIID), 255-275 (KPFA…LSYS), and 291-312 (WYNN…ASQS). Position 367 (Glu367) interacts with [CaMn4O5] cluster. A helical transmembrane segment spans residues 447–471 (RARAAAAGFEKGINRENEPVLTLRP).

Belongs to the PsbB/PsbC family. PsbC subfamily. As to quaternary structure, PSII is composed of 1 copy each of membrane proteins PsbA, PsbB, PsbC, PsbD, PsbE, PsbF, PsbH, PsbI, PsbJ, PsbK, PsbL, PsbM, PsbT, PsbX, PsbY, PsbZ, Psb30/Ycf12, at least 3 peripheral proteins of the oxygen-evolving complex and a large number of cofactors. It forms dimeric complexes. Requires Binds multiple chlorophylls and provides some of the ligands for the Ca-4Mn-5O cluster of the oxygen-evolving complex. It may also provide a ligand for a Cl- that is required for oxygen evolution. PSII binds additional chlorophylls, carotenoids and specific lipids. as cofactor.

The protein localises to the plastid. The protein resides in the chloroplast thylakoid membrane. In terms of biological role, one of the components of the core complex of photosystem II (PSII). It binds chlorophyll and helps catalyze the primary light-induced photochemical processes of PSII. PSII is a light-driven water:plastoquinone oxidoreductase, using light energy to abstract electrons from H(2)O, generating O(2) and a proton gradient subsequently used for ATP formation. In Guillardia theta (Cryptophyte), this protein is Photosystem II CP43 reaction center protein.